Consider the following 85-residue polypeptide: ATP synthase subunit c (85 aa).

2 consecutive transmembrane segments (helical) span residues 19 to 39 (LGAALGAGLAVIGAGIGIGKI) and 62 to 82 (IIAAALVEGVALLALVVCLLV).

This sequence belongs to the ATPase C chain family. In terms of assembly, F-type ATPases have 2 components, F(1) - the catalytic core - and F(0) - the membrane proton channel. F(1) has five subunits: alpha(3), beta(3), gamma(1), delta(1), epsilon(1). F(0) has three main subunits: a(1), b(2) and c(10-14). The alpha and beta chains form an alternating ring which encloses part of the gamma chain. F(1) is attached to F(0) by a central stalk formed by the gamma and epsilon chains, while a peripheral stalk is formed by the delta and b chains.

The protein localises to the cell inner membrane. Functionally, f(1)F(0) ATP synthase produces ATP from ADP in the presence of a proton or sodium gradient. F-type ATPases consist of two structural domains, F(1) containing the extramembraneous catalytic core and F(0) containing the membrane proton channel, linked together by a central stalk and a peripheral stalk. During catalysis, ATP synthesis in the catalytic domain of F(1) is coupled via a rotary mechanism of the central stalk subunits to proton translocation. In terms of biological role, key component of the F(0) channel; it plays a direct role in translocation across the membrane. A homomeric c-ring of between 10-14 subunits forms the central stalk rotor element with the F(1) delta and epsilon subunits. This chain is ATP synthase subunit c, found in Bacteroides fragilis (strain ATCC 25285 / DSM 2151 / CCUG 4856 / JCM 11019 / LMG 10263 / NCTC 9343 / Onslow / VPI 2553 / EN-2).